A 482-amino-acid chain; its full sequence is 2-succinylbenzoate--CoA ligase (482 aa).

The protein belongs to the ATP-dependent AMP-binding enzyme family. MenE subfamily.

It catalyses the reaction 2-succinylbenzoate + ATP + CoA = 2-succinylbenzoyl-CoA + AMP + diphosphate. It participates in quinol/quinone metabolism; 1,4-dihydroxy-2-naphthoate biosynthesis; 1,4-dihydroxy-2-naphthoate from chorismate: step 5/7. The protein operates within quinol/quinone metabolism; menaquinone biosynthesis. In terms of biological role, converts 2-succinylbenzoate (OSB) to 2-succinylbenzoyl-CoA (OSB-CoA). This chain is 2-succinylbenzoate--CoA ligase, found in Bacillus anthracis (strain A0248).